The primary structure comprises 422 residues: Probable protein phosphatase 2C 69 (422 aa).

The 250-residue stretch at 45–294 (TLLLAEAGER…DDTTCIVVDI (250 aa)) folds into the PPM-type phosphatase domain. Mn(2+) contacts are provided by aspartate 70, glycine 71, aspartate 246, and aspartate 285.

The protein belongs to the PP2C family. The cofactor is Mg(2+). Mn(2+) serves as cofactor.

The catalysed reaction is O-phospho-L-seryl-[protein] + H2O = L-seryl-[protein] + phosphate. The enzyme catalyses O-phospho-L-threonyl-[protein] + H2O = L-threonyl-[protein] + phosphate. This Oryza sativa subsp. japonica (Rice) protein is Probable protein phosphatase 2C 69.